Reading from the N-terminus, the 392-residue chain is 6-aminohexanoate-dimer hydrolase (392 aa).

The disordered stretch occupies residues 1–22 (MNARSTGQHPARYPGAAAGEPT). S112 is a catalytic residue.

It catalyses the reaction [N-(6-aminohexanoyl)](n) + H2O = [N-(6-aminohexanoyl)](n-1) + 6-aminohexanoate. The catalysed reaction is N-(6-aminohexanoyl)-6-aminohexanoate + H2O = 2 6-aminohexanoate. Its pathway is xenobiotic degradation; nylon-6 oligomer degradation. Its function is as follows. Involved in nylon oligomer degradation. The polypeptide is 6-aminohexanoate-dimer hydrolase (Paenarthrobacter ureafaciens).